A 236-amino-acid polypeptide reads, in one-letter code: ATP synthase subunit 4, mitochondrial (236 aa).

The transit peptide at 1–29 (MAFRALTTKAAARPLLALGPRSVAMGARY) directs the protein to the mitochondrion.

This sequence belongs to the eukaryotic ATPase subunit B family. In terms of assembly, F-type ATPases have 2 components, CF(1) - the catalytic core - and CF(0) - the membrane proton channel. In yeast, the dimeric form of ATP synthase consists of 17 polypeptides: alpha, beta, gamma, delta, epsilon, 4 (B), 5 (OSCP), 6 (A), 8, 9 (C), d, E (Tim11), f, g, h, i/j and k.

It localises to the mitochondrion. It is found in the mitochondrion inner membrane. Functionally, mitochondrial membrane ATP synthase (F(1)F(0) ATP synthase or Complex V) produces ATP from ADP in the presence of a proton gradient across the membrane which is generated by electron transport complexes of the respiratory chain. F-type ATPases consist of two structural domains, F(1) - containing the extramembraneous catalytic core, and F(0) - containing the membrane proton channel, linked together by a central stalk and a peripheral stalk. During catalysis, ATP synthesis in the catalytic domain of F(1) is coupled via a rotary mechanism of the central stalk subunits to proton translocation. Part of the complex F(0) domain and the peripheric stalk, which acts as a stator to hold the catalytic alpha(3)beta(3) subcomplex and subunit a/ATP6 static relative to the rotary elements. The sequence is that of ATP synthase subunit 4, mitochondrial (ATP4) from Eremothecium gossypii (strain ATCC 10895 / CBS 109.51 / FGSC 9923 / NRRL Y-1056) (Yeast).